Reading from the N-terminus, the 119-residue chain is uncharacterized protein (119 aa).

Residues 30–50 form a helical membrane-spanning segment; sequence LMTLPCVLFLSSFGQAVIVVL.

Its subcellular location is the membrane. This is an uncharacterized protein from Saccharomyces cerevisiae (strain ATCC 204508 / S288c) (Baker's yeast).